Here is a 555-residue protein sequence, read N- to C-terminus: Formate--tetrahydrofolate ligase (555 aa).

64-71 (TKAGIGKT) is a binding site for ATP.

Belongs to the formate--tetrahydrofolate ligase family.

The catalysed reaction is (6S)-5,6,7,8-tetrahydrofolate + formate + ATP = (6R)-10-formyltetrahydrofolate + ADP + phosphate. Its pathway is one-carbon metabolism; tetrahydrofolate interconversion. The polypeptide is Formate--tetrahydrofolate ligase (Bacteroides thetaiotaomicron (strain ATCC 29148 / DSM 2079 / JCM 5827 / CCUG 10774 / NCTC 10582 / VPI-5482 / E50)).